The chain runs to 339 residues: Phenylalanine--tRNA ligase alpha subunit (339 aa).

A Mg(2+)-binding site is contributed by Glu-253.

It belongs to the class-II aminoacyl-tRNA synthetase family. Phe-tRNA synthetase alpha subunit type 1 subfamily. As to quaternary structure, tetramer of two alpha and two beta subunits. The cofactor is Mg(2+).

It is found in the cytoplasm. The catalysed reaction is tRNA(Phe) + L-phenylalanine + ATP = L-phenylalanyl-tRNA(Phe) + AMP + diphosphate + H(+). In Ruthia magnifica subsp. Calyptogena magnifica, this protein is Phenylalanine--tRNA ligase alpha subunit.